We begin with the raw amino-acid sequence, 157 residues long: 2-C-methyl-D-erythritol 2,4-cyclodiphosphate synthase (157 aa).

The a divalent metal cation site is built by D8 and H10. 4-CDP-2-C-methyl-D-erythritol 2-phosphate contacts are provided by residues 8 to 10 and 34 to 35; these read DVH and HS. Residue H42 participates in a divalent metal cation binding. 4-CDP-2-C-methyl-D-erythritol 2-phosphate-binding positions include 56 to 58, 61 to 65, 100 to 106, 132 to 135, F139, and R142; these read DIG, FPDTD, AQAPKMA, and TTTE.

The protein belongs to the IspF family. In terms of assembly, homotrimer. It depends on a divalent metal cation as a cofactor.

It carries out the reaction 4-CDP-2-C-methyl-D-erythritol 2-phosphate = 2-C-methyl-D-erythritol 2,4-cyclic diphosphate + CMP. Its pathway is isoprenoid biosynthesis; isopentenyl diphosphate biosynthesis via DXP pathway; isopentenyl diphosphate from 1-deoxy-D-xylulose 5-phosphate: step 4/6. Involved in the biosynthesis of isopentenyl diphosphate (IPP) and dimethylallyl diphosphate (DMAPP), two major building blocks of isoprenoid compounds. Catalyzes the conversion of 4-diphosphocytidyl-2-C-methyl-D-erythritol 2-phosphate (CDP-ME2P) to 2-C-methyl-D-erythritol 2,4-cyclodiphosphate (ME-CPP) with a corresponding release of cytidine 5-monophosphate (CMP). This Pseudomonas fluorescens (strain SBW25) protein is 2-C-methyl-D-erythritol 2,4-cyclodiphosphate synthase.